Consider the following 584-residue polypeptide: Aspartate--tRNA(Asp/Asn) ligase (584 aa).

Glu173 lines the L-aspartate pocket. Residues 197 to 200 are aspartate; the sequence is QLFK. L-aspartate is bound at residue Arg219. ATP is bound by residues 219 to 221 and Gln228; that span reads RDE. Position 447 (His447) interacts with L-aspartate. Glu477 provides a ligand contact to ATP. Arg484 is a binding site for L-aspartate. 529 to 532 serves as a coordination point for ATP; the sequence is GFDR.

The protein belongs to the class-II aminoacyl-tRNA synthetase family. Type 1 subfamily. As to quaternary structure, homodimer.

It is found in the cytoplasm. The catalysed reaction is tRNA(Asx) + L-aspartate + ATP = L-aspartyl-tRNA(Asx) + AMP + diphosphate. In terms of biological role, aspartyl-tRNA synthetase with relaxed tRNA specificity since it is able to aspartylate not only its cognate tRNA(Asp) but also tRNA(Asn). Reaction proceeds in two steps: L-aspartate is first activated by ATP to form Asp-AMP and then transferred to the acceptor end of tRNA(Asp/Asn). The sequence is that of Aspartate--tRNA(Asp/Asn) ligase from Campylobacter hominis (strain ATCC BAA-381 / DSM 21671 / CCUG 45161 / LMG 19568 / NCTC 13146 / CH001A).